The following is a 231-amino-acid chain: Uracil-DNA glycosylase (231 aa).

The Proton acceptor role is filled by Asp74.

Belongs to the uracil-DNA glycosylase (UDG) superfamily. UNG family.

It is found in the cytoplasm. It carries out the reaction Hydrolyzes single-stranded DNA or mismatched double-stranded DNA and polynucleotides, releasing free uracil.. Excises uracil residues from the DNA which can arise as a result of misincorporation of dUMP residues by DNA polymerase or due to deamination of cytosine. This chain is Uracil-DNA glycosylase, found in Campylobacter jejuni subsp. doylei (strain ATCC BAA-1458 / RM4099 / 269.97).